A 119-amino-acid polypeptide reads, in one-letter code: Large ribosomal subunit protein uL22 (119 aa).

It belongs to the universal ribosomal protein uL22 family. In terms of assembly, part of the 50S ribosomal subunit.

Its function is as follows. This protein binds specifically to 23S rRNA; its binding is stimulated by other ribosomal proteins, e.g. L4, L17, and L20. It is important during the early stages of 50S assembly. It makes multiple contacts with different domains of the 23S rRNA in the assembled 50S subunit and ribosome. Functionally, the globular domain of the protein is located near the polypeptide exit tunnel on the outside of the subunit, while an extended beta-hairpin is found that lines the wall of the exit tunnel in the center of the 70S ribosome. In Bifidobacterium adolescentis (strain ATCC 15703 / DSM 20083 / NCTC 11814 / E194a), this protein is Large ribosomal subunit protein uL22.